A 150-amino-acid polypeptide reads, in one-letter code: C-type lectin mosGCTL-7 (150 aa).

The N-terminal stretch at M1–A17 is a signal peptide. One can recognise a C-type lectin domain in the interval K18–C140. Residue N67 is glycosylated (N-linked (GlcNAc...) asparagine). C111 and C131 are disulfide-bonded.

Interacts with putative receptor-type tyrosine-protein phosphatase mosPTP-1; the interaction probably mediates the recruitment of Japanese encephalitis virus particles in complex with C-type lectin mosGCTL-7 to the cell surface. As to quaternary structure, (Microbial infection) Interacts with envelope protein E (glycosylated) of Japanese encephalitis virus in a calcium-dependent manner.

Its subcellular location is the secreted. Functionally, carbohydrate-binding protein. (Microbial infection) Facilitates Japanese encephalitis virus infection in mosquitoes probably via capturing viral particles and presenting them to a ligand on the cell surface, thereby facilitating viral entry. This chain is C-type lectin mosGCTL-7, found in Aedes aegypti (Yellowfever mosquito).